The chain runs to 485 residues: ATP synthase subunit beta (485 aa).

Over residues 1-11 (MPATETADKNT) the composition is skewed to basic and acidic residues. The tract at residues 1 to 20 (MPATETADKNTKSANSDTSG) is disordered. 170–177 (GGAGVGKT) provides a ligand contact to ATP.

It belongs to the ATPase alpha/beta chains family. As to quaternary structure, F-type ATPases have 2 components, CF(1) - the catalytic core - and CF(0) - the membrane proton channel. CF(1) has five subunits: alpha(3), beta(3), gamma(1), delta(1), epsilon(1). CF(0) has three main subunits: a(1), b(2) and c(9-12). The alpha and beta chains form an alternating ring which encloses part of the gamma chain. CF(1) is attached to CF(0) by a central stalk formed by the gamma and epsilon chains, while a peripheral stalk is formed by the delta and b chains.

The protein resides in the cell membrane. The enzyme catalyses ATP + H2O + 4 H(+)(in) = ADP + phosphate + 5 H(+)(out). Functionally, produces ATP from ADP in the presence of a proton gradient across the membrane. The catalytic sites are hosted primarily by the beta subunits. The protein is ATP synthase subunit beta of Mycobacterium avium (strain 104).